We begin with the raw amino-acid sequence, 335 residues long: Mitochondrial carrier protein CoAc2 (335 aa).

Helical transmembrane passes span 12–32, 75–95, 119–139, 187–207, 225–242, and 280–302; these read SGPGLPLAVRELLAGGVAGGV, FYRGNGASVARIVPYAALHYM, LVAGSIAGGTAVICTYPLDLV, GMAPSLYGIFPYSGLKFYFYE, LGCGSVAGLLGQTITYPL, and LFSGLSINYLKVVPSVAIGFTVY. Solcar repeat units lie at residues 17–103, 113–212, and 219–308; these read PLAV…YRRW, QGPV…MKSH, and KGII…MKVC.

It belongs to the mitochondrial carrier (TC 2.A.29) family. As to expression, expressed throughout the plant.

Its subcellular location is the mitochondrion inner membrane. Required for the accumulation of coenzyme A in the mitochondrial matrix. This Zea mays (Maize) protein is Mitochondrial carrier protein CoAc2.